The chain runs to 1036 residues: uncharacterized protein (1036 aa).

2 consecutive transmembrane segments (helical) span residues 4-24 (YLFIPLLVSFLFPVALANASL) and 1004-1024 (ILWVIFGIIISLMISSAVLFL).

This sequence belongs to the MG414/MG415 family.

The protein localises to the cell membrane. This is an uncharacterized protein from Mycoplasma genitalium (strain ATCC 33530 / DSM 19775 / NCTC 10195 / G37) (Mycoplasmoides genitalium).